The following is a 149-amino-acid chain: Large ribosomal subunit protein uL22c (149 aa).

It belongs to the universal ribosomal protein uL22 family. In terms of assembly, part of the 50S ribosomal subunit.

The protein resides in the plastid. It localises to the chloroplast. Functionally, this protein binds specifically to 23S rRNA. In terms of biological role, the globular domain of the protein is located near the polypeptide exit tunnel on the outside of the subunit, while an extended beta-hairpin is found that lines the wall of the exit tunnel in the center of the 70S ribosome. The sequence is that of Large ribosomal subunit protein uL22c (rpl22) from Oryza nivara (Indian wild rice).